Reading from the N-terminus, the 368-residue chain is Xaa-Pro dipeptidase (368 aa).

Mn(2+)-binding residues include aspartate 223, aspartate 234, histidine 298, glutamate 327, and glutamate 341.

It belongs to the peptidase M24B family. Requires Mn(2+) as cofactor.

It is found in the cytoplasm. It catalyses the reaction Xaa-L-Pro dipeptide + H2O = an L-alpha-amino acid + L-proline. This Lactobacillus delbrueckii subsp. lactis protein is Xaa-Pro dipeptidase (pepQ).